The following is a 908-amino-acid chain: GPMGIMGPRGPPGASGAPGPAGEPGEPGQTGPAGARGPPGPPGKAGEDGHPGKPGRPGERGVVGPQGARGFPGTPGIPGFKGIRGHNGIDGIKGQPGAPGVKGEPGAPGENGTPGQAGARGIPGERGRVGAPGPAGARGSDGSVGPVGPAGPIGSAGPPGFPGAPGPKGEIGPVGNPGPAGPAGPRGEVGIPGVSGPVGPPGNPGANGITGAKGAAGIPGVAGAPGIPGPRGIPGPVGAAGATGARGIVGEPGPAGSKGESGNKGEPGSAGPQGPPGPAGEEGKRGPNGEAGSTGPTGPPGIRGSRGIPGADGGSRGATGPAGVRGDSGRPGEPGIMGPRGFPGSPGNIGPAGKEGPVGIPGIDGRPGPTGPAGARGEPGNIGFPGPKGPTGDPGKNGDKGHAGIAGARGPAGPPGFQGIPGPAGTAGEVGKPGERGIPGEFGIPGPAGARGERGPPGESGAVGPAGPIGSRGPSGPPGPDGNKGEPGNIGAIGTAGPSGPSGIPGERGAAGIPGGKGEKGETGIRRGAPGAIGAPGPAGANGDRGEAGPAGPAGPAGPRGSPGERGEVGPAGPNGFAGPAGAAGQPGAKGERGTKGPKGENGPVGPTGPVGAAGPAGPNGPPGPAGSRGDGGPPGATGFPGAAGRTGPPGPAGITGPPGPPGAAGKEGIRGPRGDQGPVGRSGETGASGIPGFAGEKGPAGEPGTAGIPGTPGPQGIIGAPGIIGIPGSRGERGIPGVAGSIGEPGPIGIAGPPGARGPPGAVGNPGVNGAPGEAGRHGNRGEPGPAGSVGPAGAVGPRGPSGPQGIRGDKGEPGDKGPRGIPGIKGHNGIQGIPGIAGQHGDQGAPGAVGPAGPRGPAGPSGPAGKDGRIGHPGTVGPAGIRGSQGSQGPAGPPGPPGPPGPPGPS.

Positions G1–R36 are enriched in low complexity. Disordered stretches follow at residues G1–G211 and I227–S908. Over residues A45–E59 the composition is skewed to basic and acidic residues. 8 stretches are compositionally biased toward low complexity: residues V129–P158, A183–P197, P234–V249, S293–P309, A403–Q418, P465–P474, R526–N542, and V569–A589. The span at K590–K599 shows a compositional bias: basic and acidic residues. The segment covering N602–A617 has biased composition (low complexity). The span at G627–G636 shows a compositional bias: gly residues. 4 stretches are compositionally biased toward low complexity: residues A637–T647, A701–S730, E745–E775, and P785–P805. Positions R809–P820 are enriched in basic and acidic residues. Residues A893–S908 show a composition bias toward pro residues.

This sequence belongs to the fibrillar collagen family. As to quaternary structure, trimers of one alpha 2(I) and two alpha 1(I) chains. Interacts (via C-terminus) with TMEM131 (via PapD-L domain); the interaction is direct and is involved in assembly and TRAPPIII ER-to-Golgi transport complex-dependent secretion of collagen. Post-translationally, prolines at the third position of the tripeptide repeating unit (G-X-Y) are hydroxylated in some or all of the chains. As to expression, forms the fibrils of tendon, ligaments and bones. In bones, the fibrils are mineralized with calcium hydroxyapatite.

It localises to the secreted. The protein localises to the extracellular space. It is found in the extracellular matrix. Functionally, type I collagen is a member of group I collagen (fibrillar forming collagen). This is Collagen alpha-2(I) chain from Toxodon sp.